We begin with the raw amino-acid sequence, 466 residues long: 3-isopropylmalate dehydratase large subunit (466 aa).

Residues C347, C407, and C410 each contribute to the [4Fe-4S] cluster site.

It belongs to the aconitase/IPM isomerase family. LeuC type 1 subfamily. As to quaternary structure, heterodimer of LeuC and LeuD. [4Fe-4S] cluster serves as cofactor.

It carries out the reaction (2R,3S)-3-isopropylmalate = (2S)-2-isopropylmalate. It participates in amino-acid biosynthesis; L-leucine biosynthesis; L-leucine from 3-methyl-2-oxobutanoate: step 2/4. In terms of biological role, catalyzes the isomerization between 2-isopropylmalate and 3-isopropylmalate, via the formation of 2-isopropylmaleate. The sequence is that of 3-isopropylmalate dehydratase large subunit from Shewanella piezotolerans (strain WP3 / JCM 13877).